The sequence spans 183 residues: Ribosome-recycling factor (183 aa).

This sequence belongs to the RRF family.

The protein resides in the cytoplasm. Its function is as follows. Responsible for the release of ribosomes from messenger RNA at the termination of protein biosynthesis. May increase the efficiency of translation by recycling ribosomes from one round of translation to another. This Bifidobacterium longum subsp. infantis (strain ATCC 15697 / DSM 20088 / JCM 1222 / NCTC 11817 / S12) protein is Ribosome-recycling factor.